Here is a 101-residue protein sequence, read N- to C-terminus: Protein translation factor SUI1 homolog (101 aa).

This sequence belongs to the SUI1 family.

The polypeptide is Protein translation factor SUI1 homolog (Methanothermobacter thermautotrophicus (strain ATCC 29096 / DSM 1053 / JCM 10044 / NBRC 100330 / Delta H) (Methanobacterium thermoautotrophicum)).